Here is a 166-residue protein sequence, read N- to C-terminus: MFKKLFGKGKEVQKDIAIYTPLTGEFVKIEDIPDPVFAQKMMGEGFGINPTEGEVVSPIAGRVDNVFPTKHAIGLKADNGLELLVHIGLDTVQLDGEGFEVLVSSGDEVNVGDPLVRFNLEYINNNAKSVISPIIITNTDQAASINIYDENAVIKGETKVIDVTMN.

In terms of domain architecture, PTS EIIA type-1 spans 34–138 (DPVFAQKMMG…SVISPIIITN (105 aa)). Positions 71 and 86 each coordinate Zn(2+). The Tele-phosphohistidine intermediate; for EIIA activity role is filled by histidine 86. Histidine 86 is modified (phosphohistidine; by HPr).

In terms of assembly, heterodimer with glycerol kinase (glpk). Requires Zn(2+) as cofactor.

It is found in the cytoplasm. Functionally, the phosphoenolpyruvate-dependent sugar phosphotransferase system (sugar PTS), a major carbohydrate active transport system, catalyzes the phosphorylation of incoming sugar substrates concomitantly with their translocation across the cell membrane. The enzyme II complex composed of PtsG and Crr is involved in glucose transport. The polypeptide is PTS system glucose-specific EIIA component (crr) (Staphylococcus aureus (strain MSSA476)).